Reading from the N-terminus, the 523-residue chain is Ribonuclease Y (523 aa).

A helical membrane pass occupies residues 3–23; that stretch reads VWYAIGSIIFGLLVGVSVYLI. One can recognise a KH domain in the interval 213-279; sequence LVNVINLPND…TKTIEKLVED (67 aa). The HD domain maps to 339–432; it reads ALGHSIEVAN…VCAADTLSAA (94 aa).

The protein belongs to the RNase Y family.

It localises to the cell membrane. Endoribonuclease that initiates mRNA decay. The sequence is that of Ribonuclease Y from Helicobacter hepaticus (strain ATCC 51449 / 3B1).